Reading from the N-terminus, the 275-residue chain is Trans-aconitate 2-methyltransferase (275 aa).

This sequence belongs to the methyltransferase superfamily. Tam family.

Its subcellular location is the cytoplasm. It catalyses the reaction trans-aconitate + S-adenosyl-L-methionine = (E)-3-(methoxycarbonyl)pent-2-enedioate + S-adenosyl-L-homocysteine. In terms of biological role, catalyzes the S-adenosylmethionine monomethyl esterification of trans-aconitate. The protein is Trans-aconitate 2-methyltransferase of Pseudomonas paraeruginosa (strain DSM 24068 / PA7) (Pseudomonas aeruginosa (strain PA7)).